Reading from the N-terminus, the 105-residue chain is UPF0145 protein lpg0197 (105 aa).

This sequence belongs to the UPF0145 family.

In Legionella pneumophila subsp. pneumophila (strain Philadelphia 1 / ATCC 33152 / DSM 7513), this protein is UPF0145 protein lpg0197.